The primary structure comprises 443 residues: Adenylyltransferase and sulfurtransferase UBA4 (443 aa).

ATP contacts are provided by residues Gly-83, Asp-104, 111–115 (SNLHR), Lys-128, and 172–173 (DT). Zn(2+)-binding residues include Cys-214 and Cys-217. The Glycyl thioester intermediate; for adenylyltransferase activity role is filled by Cys-231. Zn(2+) is bound by residues Cys-292 and Cys-295. The region spanning 343 to 441 (QSKAPVLLDV…WSDIVNPKFP (99 aa)) is the Rhodanese domain. Residue Cys-400 is the Cysteine persulfide intermediate; for sulfurtransferase activity of the active site.

In the N-terminal section; belongs to the HesA/MoeB/ThiF family. UBA4 subfamily. Requires Zn(2+) as cofactor.

The protein localises to the cytoplasm. Its subcellular location is the cytosol. It participates in tRNA modification; 5-methoxycarbonylmethyl-2-thiouridine-tRNA biosynthesis. Its function is as follows. Plays a central role in 2-thiolation of mcm(5)S(2)U at tRNA wobble positions of cytosolic tRNA(Lys), tRNA(Glu) and tRNA(Gln). Acts by mediating the C-terminal thiocarboxylation of sulfur carrier URM1. Its N-terminus first activates URM1 as acyl-adenylate (-COAMP), then the persulfide sulfur on the catalytic cysteine is transferred to URM1 to form thiocarboxylation (-COSH) of its C-terminus. The reaction probably involves hydrogen sulfide that is generated from the persulfide intermediate and that acts as a nucleophile towards URM1. Subsequently, a transient disulfide bond is formed. Does not use thiosulfate as sulfur donor; NFS1 probably acting as a sulfur donor for thiocarboxylation reactions. Prior mcm(5) tRNA modification by the elongator complex is required for 2-thiolation. May also be involved in protein urmylation. The protein is Adenylyltransferase and sulfurtransferase UBA4 of Scheffersomyces stipitis (strain ATCC 58785 / CBS 6054 / NBRC 10063 / NRRL Y-11545) (Yeast).